Consider the following 682-residue polypeptide: DNA-directed RNA polymerase subunit beta' (682 aa).

C69, C71, C87, and C90 together coordinate Zn(2+). Mg(2+)-binding residues include D489, D491, and D493.

It belongs to the RNA polymerase beta' chain family. RpoC1 subfamily. In terms of assembly, in plastids the minimal PEP RNA polymerase catalytic core is composed of four subunits: alpha, beta, beta', and beta''. When a (nuclear-encoded) sigma factor is associated with the core the holoenzyme is formed, which can initiate transcription. The cofactor is Mg(2+). Zn(2+) serves as cofactor.

It is found in the plastid. The protein resides in the chloroplast. It carries out the reaction RNA(n) + a ribonucleoside 5'-triphosphate = RNA(n+1) + diphosphate. In terms of biological role, DNA-dependent RNA polymerase catalyzes the transcription of DNA into RNA using the four ribonucleoside triphosphates as substrates. This is DNA-directed RNA polymerase subunit beta' from Acorus gramineus (Dwarf sweet flag).